A 127-amino-acid polypeptide reads, in one-letter code: MIKATKLKKKYDKLKIAKWSFLGILIILFILSNHYYIKHSNIFQNILLTSLTILSTGLIFLTKSGKKFLIFTKSAIHETKLITWPNFKDTLHVTFTVIIVTILLALILWGLDNILIWFISLITSLRL.

The next 3 helical transmembrane spans lie at 16 to 36 (IAKW…NHYY), 42 to 62 (IFQN…IFLT), and 98 to 118 (IIVT…LIWF).

The protein belongs to the SecE/SEC61-gamma family. In terms of assembly, component of the Sec protein translocase complex. Heterotrimer consisting of SecY, SecE and SecG subunits. The heterotrimers can form oligomers, although 1 heterotrimer is thought to be able to translocate proteins. Interacts with the ribosome. Interacts with SecDF, and other proteins may be involved. Interacts with SecA.

It is found in the cell membrane. In terms of biological role, essential subunit of the Sec protein translocation channel SecYEG. Clamps together the 2 halves of SecY. May contact the channel plug during translocation. This chain is Protein translocase subunit SecE, found in Buchnera aphidicola subsp. Baizongia pistaciae (strain Bp).